A 237-amino-acid chain; its full sequence is MSAPASTTQPIGSTTSTTTKTAGATPATASGLFTIPDGDFFSTARAIVASNAVATNEDLSKIEAIWKDMKVPTDTMAQAAWDLVRHCADVGSSAQTEMIDTGPYSNGISRARLAAAIKEVCTLRQFCMKYAPVVWNWMLTNNSPPANWQAQGFKPEHKFAAFDFFNGVTNPAAIMPKEGLIRPPSEAEMNAAQTAAFVKITKARAQSNDFASLDAAVTRGRITGTTTAEAVVTLPPP.

The disordered stretch occupies residues 1–24 (MSAPASTTQPIGSTTSTTTKTAGA).

This sequence belongs to the potexvirus capsid protein family.

It localises to the virion. Its function is as follows. Required for genome encapsidation. Forms ribonucleoprotein complexes along with TGB1 helicase and viral RNA. In Potato virus X (strain UK3) (PVX), this protein is Coat protein.